The sequence spans 334 residues: Probable fructose-bisphosphate aldolase class 1 (334 aa).

The protein belongs to the class I fructose-bisphosphate aldolase family.

The catalysed reaction is beta-D-fructose 1,6-bisphosphate = D-glyceraldehyde 3-phosphate + dihydroxyacetone phosphate. It participates in carbohydrate degradation; glycolysis; D-glyceraldehyde 3-phosphate and glycerone phosphate from D-glucose: step 4/4. This is Probable fructose-bisphosphate aldolase class 1 from Xylella fastidiosa (strain Temecula1 / ATCC 700964).